A 567-amino-acid polypeptide reads, in one-letter code: Interleukin-1 receptor-like 1 (567 aa).

An N-terminal signal peptide occupies residues 1-26; that stretch reads MIDRQRMGLWALAILTLPMYLTVTEG. Ig-like C2-type domains follow at residues 27-109 and 120-203; these read SKSS…LNVT and PDYL…VTAT. Residues 27–332 lie on the Extracellular side of the membrane; sequence SKSSWGLENE…LRRKQPIDHR (306 aa). A disulfide bridge links Cys-42 with Cys-93. Asn-60, Asn-101, Asn-107, Asn-146, Asn-176, and Asn-194 each carry an N-linked (GlcNAc...) asparagine glycan. Cystine bridges form between Cys-117/Cys-157 and Cys-139/Cys-187. A flexible linker region spans residues 204 to 216; the sequence is RSFTVEEKGFSMF. The Ig-like C2-type 3 domain occupies 217-324; it reads PVITNPPYNH…GMIRHTIRLR (108 aa). Asn-225, Asn-259, and Asn-278 each carry an N-linked (GlcNAc...) asparagine glycan. Cystine bridges form between Cys-240-Cys-308 and Cys-243-Cys-287. A Glycyl lysine isopeptide (Lys-Gly) (interchain with G-Cter in ubiquitin) cross-link involves residue Lys-326. Residues 333 to 355 traverse the membrane as a helical segment; it reads SIYYIVAGCSLLLMFINVLVIVL. Topologically, residues 356–567 are cytoplasmic; it reads KVFWIEVALF…GKACLDLKHF (212 aa). Residues 380–540 enclose the TIR domain; it reads KLYDAYIIYP…KFWKHVRYQM (161 aa). The residue at position 442 (Ser-442) is a Phosphoserine; by GSK3-beta. Residue Glu-466 is part of the active site.

The protein belongs to the interleukin-1 receptor family. In terms of assembly, interacts with MYD88, IRAK1, IRAK4, and TRAF6. Bound to its ligand IL33, interacts with IL1RAP to form the minimal interleukin-33 signaling complex with a 1:1:1 stoichiometry. Interacts with KIT (bound to KITLG/SCF). A mast cell-specific KITLG/SCF-induced interleukin-33 signaling complex contains IL1RL1, IL1RAP, KIT and MYD88. Interacts with TMED1. Phosphorylated by GSK3B at Ser-442; leading to proteasomal degradation. Post-translationally, ubiquitinated at Lys-326 in a FBXL19-mediated manner; leading to proteasomal degradation. Ubiquitination by TRAF6 via 'Lys-27'-linked polyubiquitination and deubiquitination by USP38 serves as a critical regulatory mechanism for fine-tuning IL1RL1-mediated inflammatory response. As to expression, predominantly expressed in hematopoietic tissues, and in macrophage, erythroid, epithelial and fibroblast cell lines. Isoform A is expressed in brain astrocytes and microglia. Isoform B is expressed in brain endothelial cells.

It localises to the cell membrane. The protein localises to the secreted. It catalyses the reaction NAD(+) + H2O = ADP-D-ribose + nicotinamide + H(+). Its function is as follows. Receptor for interleukin-33 (IL-33) which plays crucial roles in innate and adaptive immunity, contributing to tissue homeostasis and responses to environmental stresses together with coreceptor IL1RAP. Its stimulation recruits MYD88, IRAK1, IRAK4, and TRAF6, followed by phosphorylation of MAPK3/ERK1 and/or MAPK1/ERK2, MAPK14, and MAPK8. Possibly involved in helper T-cell function. Upon tissue injury, induces UCP2-dependent mitochondrial rewiring that attenuates the generation of reactive oxygen species and preserves the integrity of Krebs cycle required for persistent production of itaconate and subsequent GATA3-dependent differentiation of inflammation-resolving alternatively activated macrophages. In terms of biological role, inhibits IL-33 signaling. The polypeptide is Interleukin-1 receptor-like 1 (Il1rl1) (Mus musculus (Mouse)).